Consider the following 660-residue polypeptide: Elongation factor 4 (660 aa).

The tr-type G domain maps to Ala55–Gln241. GTP contacts are provided by residues Asp67–Thr72 and Asn188–Asp191.

This sequence belongs to the TRAFAC class translation factor GTPase superfamily. Classic translation factor GTPase family. LepA subfamily.

The protein localises to the cell membrane. It carries out the reaction GTP + H2O = GDP + phosphate + H(+). Its function is as follows. Required for accurate and efficient protein synthesis under certain stress conditions. May act as a fidelity factor of the translation reaction, by catalyzing a one-codon backward translocation of tRNAs on improperly translocated ribosomes. Back-translocation proceeds from a post-translocation (POST) complex to a pre-translocation (PRE) complex, thus giving elongation factor G a second chance to translocate the tRNAs correctly. Binds to ribosomes in a GTP-dependent manner. This is Elongation factor 4 from Mycolicibacterium paratuberculosis (strain ATCC BAA-968 / K-10) (Mycobacterium paratuberculosis).